A 417-amino-acid chain; its full sequence is D-inositol 3-phosphate glycosyltransferase (417 aa).

His-10 contributes to the 1D-myo-inositol 3-phosphate binding site. Residues 16 to 17 (QP) and Gly-24 contribute to the UDP-N-acetyl-alpha-D-glucosamine site. Residues 21-26 (DAGGMN), Lys-79, Tyr-112, Thr-136, and Arg-156 contribute to the 1D-myo-inositol 3-phosphate site. 3 residues coordinate UDP-N-acetyl-alpha-D-glucosamine: Arg-230, Lys-235, and Gln-296. The Mg(2+) site is built by Tyr-305, Arg-306, and Ala-308. Residues Glu-318 and Glu-326 each coordinate UDP-N-acetyl-alpha-D-glucosamine. Position 332 (Thr-332) interacts with Mg(2+).

It belongs to the glycosyltransferase group 1 family. MshA subfamily. In terms of assembly, homodimer.

The catalysed reaction is 1D-myo-inositol 3-phosphate + UDP-N-acetyl-alpha-D-glucosamine = 1D-myo-inositol 2-acetamido-2-deoxy-alpha-D-glucopyranoside 3-phosphate + UDP + H(+). In terms of biological role, catalyzes the transfer of a N-acetyl-glucosamine moiety to 1D-myo-inositol 3-phosphate to produce 1D-myo-inositol 2-acetamido-2-deoxy-glucopyranoside 3-phosphate in the mycothiol biosynthesis pathway. This is D-inositol 3-phosphate glycosyltransferase from Actinosynnema mirum (strain ATCC 29888 / DSM 43827 / JCM 3225 / NBRC 14064 / NCIMB 13271 / NRRL B-12336 / IMRU 3971 / 101).